The primary structure comprises 292 residues: 33 kDa chaperonin (292 aa).

2 disulfides stabilise this stretch: Cys230–Cys232 and Cys263–Cys266.

This sequence belongs to the HSP33 family. Post-translationally, under oxidizing conditions two disulfide bonds are formed involving the reactive cysteines. Under reducing conditions zinc is bound to the reactive cysteines and the protein is inactive.

It is found in the cytoplasm. In terms of biological role, redox regulated molecular chaperone. Protects both thermally unfolding and oxidatively damaged proteins from irreversible aggregation. Plays an important role in the bacterial defense system toward oxidative stress. This chain is 33 kDa chaperonin, found in Serratia proteamaculans (strain 568).